Reading from the N-terminus, the 299-residue chain is Coenzyme PQQ synthesis protein B (299 aa).

The protein belongs to the PqqB family.

It participates in cofactor biosynthesis; pyrroloquinoline quinone biosynthesis. Its function is as follows. May be involved in the transport of PQQ or its precursor to the periplasm. The sequence is that of Coenzyme PQQ synthesis protein B from Xanthomonas euvesicatoria pv. vesicatoria (strain 85-10) (Xanthomonas campestris pv. vesicatoria).